A 247-amino-acid polypeptide reads, in one-letter code: Carboxy-S-adenosyl-L-methionine synthase (247 aa).

Residues Y39, 64–66 (GCS), 89–90 (DN), 117–118 (DI), N132, and R199 each bind S-adenosyl-L-methionine.

This sequence belongs to the class I-like SAM-binding methyltransferase superfamily. Cx-SAM synthase family. Homodimer.

It carries out the reaction prephenate + S-adenosyl-L-methionine = carboxy-S-adenosyl-L-methionine + 3-phenylpyruvate + H2O. Catalyzes the conversion of S-adenosyl-L-methionine (SAM) to carboxy-S-adenosyl-L-methionine (Cx-SAM). The sequence is that of Carboxy-S-adenosyl-L-methionine synthase from Klebsiella pneumoniae (strain 342).